Reading from the N-terminus, the 293-residue chain is Small ribosomal subunit protein uS5 (293 aa).

Positions 1 to 56 (MADDAGAAGGPGGPGGPGMGGRGGFRGGFGSGVRGRGRGRGRGRGRGRGARGGKAE) are disordered. Ala-2 is modified (N-acetylalanine). Positions 7–34 (AAGGPGGPGGPGMGGRGGFRGGFGSGVR) are enriched in gly residues. The segment covering 35–51 (GRGRGRGRGRGRGRGAR) has biased composition (basic residues). Residues Lys-54 and Lys-58 each participate in a glycyl lysine isopeptide (Lys-Gly) (interchain with G-Cter in ubiquitin) cross-link. The S5 DRBM domain occupies 102–165 (LKDEVLKIMP…ILAKLSIVPV (64 aa)). Thr-252 carries the post-translational modification Phosphothreonine. N6-acetyllysine is present on Lys-263. Ser-264 bears the Phosphoserine mark. Thr-270 is subject to Phosphothreonine. Lys-275 carries the N6-acetyllysine; alternate modification. A Glycyl lysine isopeptide (Lys-Gly) (interchain with G-Cter in SUMO1); alternate cross-link involves residue Lys-275. Residue Lys-275 forms a Glycyl lysine isopeptide (Lys-Gly) (interchain with G-Cter in SUMO2); alternate linkage. A Glycyl lysine isopeptide (Lys-Gly) (interchain with G-Cter in ubiquitin); alternate cross-link involves residue Lys-275. Ser-281 is modified (phosphoserine).

Belongs to the universal ribosomal protein uS5 family. As to quaternary structure, component of the small ribosomal subunit. Interacts with zinc finger protein ZNF277 (via zinc-finger domains); the interaction is direct; the interaction is extra-ribosomal. Interaction with ZNF277 competes with the binding of RPS2 to protein arginine methyltransferase PRMT3. In terms of processing, citrullinated by PADI4 in the Arg/Gly-rich region. Asymmetric arginine dimethylation by PRMT3 occurs at multiple sites in the Arg/Gly-rich region. Post-translationally, monoubiquitinated at Lys-54 and Lys-58 by RNF10 when a ribosome has stalled during translation, leading to its degradation by the proteasome. Deubiquitinated at Lys-54 and Lys-58 by USP10, preventing degradation by the proteasome and promoting 40S ribosome subunit recycling following ribosome dissociation.

The protein resides in the cytoplasm. Its subcellular location is the nucleus. It localises to the nucleolus. In terms of biological role, component of the ribosome, a large ribonucleoprotein complex responsible for the synthesis of proteins in the cell. The small ribosomal subunit (SSU) binds messenger RNAs (mRNAs) and translates the encoded message by selecting cognate aminoacyl-transfer RNA (tRNA) molecules. The large subunit (LSU) contains the ribosomal catalytic site termed the peptidyl transferase center (PTC), which catalyzes the formation of peptide bonds, thereby polymerizing the amino acids delivered by tRNAs into a polypeptide chain. The nascent polypeptides leave the ribosome through a tunnel in the LSU and interact with protein factors that function in enzymatic processing, targeting, and the membrane insertion of nascent chains at the exit of the ribosomal tunnel. Plays a role in the assembly and function of the 40S ribosomal subunit. Mutations in this protein affects the control of translational fidelity. Involved in nucleolar processing of pre-18S ribosomal RNA and ribosome assembly. This chain is Small ribosomal subunit protein uS5 (RPS2), found in Bos taurus (Bovine).